Here is a 351-residue protein sequence, read N- to C-terminus: Ferrochelatase (351 aa).

Residues His184 and Glu265 each contribute to the Fe cation site.

The protein belongs to the ferrochelatase family.

Its subcellular location is the cytoplasm. It carries out the reaction heme b + 2 H(+) = protoporphyrin IX + Fe(2+). The protein operates within porphyrin-containing compound metabolism; protoheme biosynthesis; protoheme from protoporphyrin-IX: step 1/1. In terms of biological role, catalyzes the ferrous insertion into protoporphyrin IX. The polypeptide is Ferrochelatase (Rhodopirellula baltica (strain DSM 10527 / NCIMB 13988 / SH1)).